A 1185-amino-acid polypeptide reads, in one-letter code: Liprin-alpha-4 (1185 aa).

Coiled coils occupy residues 24–123 and 165–499; these read ANFE…CLVS and DEKV…GRGG. 2 disordered regions span residues 638–709 and 721–757; these read SASP…RTLR and EEGK…KSSI. A Phosphoserine modification is found at Ser640. The segment covering 645–656 has biased composition (polar residues); it reads GRSTPKLTSRSA. Ser681 is modified (phosphoserine). The span at 684–695 shows a compositional bias: basic and acidic residues; the sequence is SREENREDKATI. A compositionally biased stretch (low complexity) spans 729-742; sequence DQGSNPSSSNSSQD. 3 consecutive SAM domains span residues 829–895, 944–1008, and 1032–1101; these read WDGP…MVSL, NHEW…LKRL, and WTND…LLAL.

It belongs to the liprin family. Liprin-alpha subfamily. Forms homodimers and heterodimers with liprins-alpha and liprins-beta. Interacts with the second PTPase domain of PTPRD, PTPRF and PTPRS. Interacts with RIMS1 and RIMS2. Interacts with GIT1 and GIT2. Interacts with GRIP1. Interacts with KIF1A. Expressed only in the heart, brain, and skeletal muscle.

Its subcellular location is the cytoplasm. It localises to the cell surface. In terms of biological role, may regulate the disassembly of focal adhesions. May localize receptor-like tyrosine phosphatases type 2A at specific sites on the plasma membrane, possibly regulating their interaction with the extracellular environment and their association with substrates. The protein is Liprin-alpha-4 (PPFIA4) of Homo sapiens (Human).